The primary structure comprises 696 residues: Tensin-4 (696 aa).

Positions 1–14 are cleaved as a signal peptide; sequence MSSSLLAGGHMVSL. Disordered stretches follow at residues 157–246, 271–344, and 356–416; these read LDGP…RAPQ, SLPH…CPAS, and LING…KDMQ. Polar residues predominate over residues 192-203; that stretch reads SSSNESLIFSGN. Residue serine 230 is modified to Phosphoserine. The span at 271-304 shows a compositional bias: low complexity; it reads SLPHSSLSSYPSSSRSLGSPASSSSSLHSLDRGS. 2 stretches are compositionally biased toward polar residues: residues 326-344 and 372-397; these read QAVQ…CPAS and PGHQ…SPSK. In terms of domain architecture, SH2 spans 429 to 536; sequence WFKPSITREQ…ALPCKLTIPQ (108 aa). Positions 563 to 690 constitute a PTB domain; the sequence is CHTLYLSSVS…QVISLVTALL (128 aa).

It belongs to the PTEN phosphatase protein family. Interacts (via SH2 domain) with Rho GTPase-activating protein DLC1 (via C-terminus); the interaction is independent of DLC1 tyrosine phosphorylation. Interacts with integrin ITGB1; the interaction displaces tensin TNS3 from the ITGB1 cytoplasmic tail and promotes ITGB1 stability. Interacts (via SH2 domain) with E3 ubiquitin-protein ligase CBL (phosphorylated on 'Tyr-780'); the interaction is enhanced in the presence of EGF and reduces interaction of CBL with EGFR. Interacts (via SH2 domain) with receptor tyrosine kinase MET (when phosphorylated); the interaction increases MET protein stability.

The protein resides in the cell junction. It is found in the focal adhesion. The protein localises to the cytoplasm. Its subcellular location is the cytoskeleton. Its function is as follows. Promotes EGF-induced cell migration by displacing tensin TNS3 from the cytoplasmic tail of integrin ITGB1 which results in dissociation of TNS3 from focal adhesions, disassembly of actin stress fibers and initiation of cell migration. Suppresses ligand-induced degradation of EGFR by reducing EGFR ubiquitination in the presence of EGF. Increases MET protein stability by inhibiting MET endocytosis and subsequent lysosomal degradation which leads to increased cell survival, proliferation and migration. This Mus musculus (Mouse) protein is Tensin-4 (Tns4).